Here is a 633-residue protein sequence, read N- to C-terminus: Shootin-1 (633 aa).

An N-acetylmethionine modification is found at M1. 2 positions are modified to phosphoserine: S3 and S4. Positions 7–353 (EKQLQLITSL…RVNQSENSVP (347 aa)) form a coiled coil. 2 positions are modified to phosphoserine; by PAK1: S101 and S249. Residues 343-508 (KRVNQSENSV…LATSESKSMP (166 aa)) are disordered. A compositionally biased stretch (pro residues) spans 352–369 (VPPPPPPPPPLPPPPPNP). The residue at position 375 (S375) is a Phosphoserine. The segment covering 403 to 418 (TDLKRQAVEEMMDRIK) has biased composition (basic and acidic residues). The segment covering 456-465 (LNKSTSSRSL) has biased composition (polar residues). Phosphoserine is present on S473. Position 487 is a phosphothreonine (T487). Residues 490–505 (ADSSSPTGILATSESK) are compositionally biased toward polar residues. S494 carries the post-translational modification Phosphoserine. Phosphothreonine is present on T496. A phosphoserine mark is found at S506 and S515. Residues 525–633 (TLEAEFNNPC…KTGETDSSNC (109 aa)) form a disordered region. The residue at position 537 (T537) is a Phosphothreonine. Residues 550-559 (CTNSKVTFQP) are compositionally biased toward polar residues. The span at 590 to 621 (PQTKDQAAEKDPTQCKEEERGETQPEFKEDSS) shows a compositional bias: basic and acidic residues.

It belongs to the shootin family. Interacts with PFN2. Interacts (via N-terminus) with KIF20B; this interaction is direct and promotes the association of SHTN1 to microtubules in primary neurons. Associates with microtubule. Interacts with L1CAM; this interaction occurs in axonal growth cones. Interacts with actin filament retrograde flow; this interaction is enhanced in a netrin-1- and PAK1-dependent manner and promotes F-actin-substrate coupling and concomitant formation of traction forces at axonal growth cones. Interacts with RUFY3. In terms of processing, phosphorylated on Ser-101 and Ser-249 by PAK1 through a CDC42- and RAC1-dependent signaling pathway, which enhances its association with F-actin retrograde flow in filopodia and lamellipodia of axonal growth cones. Phosphorylation on Ser-101 and Ser-249 is increased by netrin-1. As to expression, brain-specific (at protein level). Expressed in hippocampal neurons.

The protein resides in the perikaryon. The protein localises to the cell projection. Its subcellular location is the axon. It is found in the growth cone. It localises to the cytoplasm. The protein resides in the cytoskeleton. The protein localises to the filopodium. Its subcellular location is the lamellipodium. Its function is as follows. Involved in the generation of internal asymmetric signals required for neuronal polarization and neurite outgrowth. Mediates netrin-1-induced F-actin-substrate coupling or 'clutch engagement' within the axon growth cone through activation of CDC42, RAC1 and PAK1-dependent signaling pathway, thereby converting the F-actin retrograde flow into traction forces, concomitantly with filopodium extension and axon outgrowth. Plays a role in cytoskeletal organization by regulating the subcellular localization of phosphoinositide 3-kinase (PI3K) activity at the axonal growth cone. Also plays a role in regenerative neurite outgrowth. In the developing cortex, cooperates with KIF20B to promote both the transition from the multipolar to the bipolar stage and the radial migration of cortical neurons from the ventricular zone toward the superficial layer of the neocortex. Involved in the accumulation of phosphatidylinositol 3,4,5-trisphosphate (PIP3) in the growth cone of primary hippocampal neurons. In Rattus norvegicus (Rat), this protein is Shootin-1.